The following is an 84-amino-acid chain: uncharacterized protein (84 aa).

The segment at 8-47 (CECCDRDLPPDSGDAMICTFECTFCAGCAETKLGGTCPNC) is cysteine motif.

This is an uncharacterized protein from Rhizobium meliloti (strain 1021) (Ensifer meliloti).